A 315-amino-acid chain; its full sequence is Methionyl-tRNA formyltransferase (315 aa).

113–116 (SILP) contacts (6S)-5,6,7,8-tetrahydrofolate.

This sequence belongs to the Fmt family.

The catalysed reaction is L-methionyl-tRNA(fMet) + (6R)-10-formyltetrahydrofolate = N-formyl-L-methionyl-tRNA(fMet) + (6S)-5,6,7,8-tetrahydrofolate + H(+). In terms of biological role, attaches a formyl group to the free amino group of methionyl-tRNA(fMet). The formyl group appears to play a dual role in the initiator identity of N-formylmethionyl-tRNA by promoting its recognition by IF2 and preventing the misappropriation of this tRNA by the elongation apparatus. The chain is Methionyl-tRNA formyltransferase from Aliivibrio fischeri (strain MJ11) (Vibrio fischeri).